The sequence spans 213 residues: uncharacterized protein (213 aa).

S-adenosyl-L-methionine is bound by residues G53, E74, and D97.

Belongs to the methyltransferase superfamily. YrrT family.

Functionally, could be a S-adenosyl-L-methionine-dependent methyltransferase. This is an uncharacterized protein from Geobacillus sp. (strain WCH70).